The sequence spans 405 residues: 4-hydroxy-3-methylbut-2-en-1-yl diphosphate synthase (ferredoxin) (405 aa).

The [4Fe-4S] cluster site is built by Cys-314, Cys-317, Cys-348, and Glu-355.

This sequence belongs to the IspG family. The cofactor is [4Fe-4S] cluster.

The enzyme catalyses (2E)-4-hydroxy-3-methylbut-2-enyl diphosphate + 2 oxidized [2Fe-2S]-[ferredoxin] + H2O = 2-C-methyl-D-erythritol 2,4-cyclic diphosphate + 2 reduced [2Fe-2S]-[ferredoxin] + H(+). The protein operates within isoprenoid biosynthesis; isopentenyl diphosphate biosynthesis via DXP pathway; isopentenyl diphosphate from 1-deoxy-D-xylulose 5-phosphate: step 5/6. In terms of biological role, converts 2C-methyl-D-erythritol 2,4-cyclodiphosphate (ME-2,4cPP) into 1-hydroxy-2-methyl-2-(E)-butenyl 4-diphosphate. The protein is 4-hydroxy-3-methylbut-2-en-1-yl diphosphate synthase (ferredoxin) of Prochlorococcus marinus subsp. pastoris (strain CCMP1986 / NIES-2087 / MED4).